The primary structure comprises 598 residues: Elongation factor 4 (598 aa).

In terms of domain architecture, tr-type G spans 2–184 (NNIRNFAIIA…AIVTKLPAPQ (183 aa)). Residues 14–19 (DHGKST) and 131–134 (NKVD) each bind GTP.

Belongs to the TRAFAC class translation factor GTPase superfamily. Classic translation factor GTPase family. LepA subfamily.

The protein localises to the cell membrane. The enzyme catalyses GTP + H2O = GDP + phosphate + H(+). Functionally, required for accurate and efficient protein synthesis under certain stress conditions. May act as a fidelity factor of the translation reaction, by catalyzing a one-codon backward translocation of tRNAs on improperly translocated ribosomes. Back-translocation proceeds from a post-translocation (POST) complex to a pre-translocation (PRE) complex, thus giving elongation factor G a second chance to translocate the tRNAs correctly. Binds to ribosomes in a GTP-dependent manner. The polypeptide is Elongation factor 4 (Wolbachia pipientis subsp. Culex pipiens (strain wPip)).